The following is a 612-amino-acid chain: T-cell immunomodulatory protein (612 aa).

The first 33 residues, Met-1–Ala-33, serve as a signal peptide directing secretion. N-linked (GlcNAc...) asparagine glycans are attached at residues Asn-36, Asn-95, Asn-139, Asn-146, Asn-151, Asn-176, Asn-188, Asn-226, and Asn-243. An FG-GAP; atypical repeat occupies Val-258 to Val-293. Asn-353, Asn-371, and Asn-482 each carry an N-linked (GlcNAc...) asparagine glycan. Residues Val-567–Ile-587 traverse the membrane as a helical segment.

It belongs to the TIP family. As to quaternary structure, interacts with RUVBL1, RUVBL2 and alpha-tubulin. In terms of tissue distribution, ubiquitously expressed.

It localises to the secreted. It is found in the membrane. In terms of biological role, modulator of T-cell function. Has a protective effect in graft versus host disease model. In Homo sapiens (Human), this protein is T-cell immunomodulatory protein.